A 951-amino-acid polypeptide reads, in one-letter code: Exportin-2 (951 aa).

Positions 29–104 constitute an Importin N-terminal domain; that stretch reads ATSKIQKFVK…KSLLLNFILS (76 aa).

The protein belongs to the XPO2/CSE1 family.

It is found in the cytoplasm. The protein resides in the nucleus. Its function is as follows. Export receptor for importin alpha. Mediates importin-alpha re-export from the nucleus to the cytoplasm after import substrates have been released into the nucleoplasm. The chain is Exportin-2 (xpo2) from Dictyostelium discoideum (Social amoeba).